Consider the following 373-residue polypeptide: Chaperone protein DnaJ (373 aa).

A J domain is found at 5 to 70 (DYYEVLGLQK…EKKSNYDQFG (66 aa)). Residues 132-214 (GVEKEITVNR…CRGNGNVRKT (83 aa)) form a CR-type zinc finger. Zn(2+)-binding residues include cysteine 145, cysteine 148, cysteine 162, cysteine 165, cysteine 188, cysteine 191, cysteine 202, and cysteine 205. CXXCXGXG motif repeat units lie at residues 145-152 (CEHCNGSG), 162-169 (CPTCSGTG), 188-195 (CDRCSGTG), and 202-209 (CTHCRGNG).

Belongs to the DnaJ family. Homodimer. Zn(2+) is required as a cofactor.

The protein localises to the cytoplasm. Participates actively in the response to hyperosmotic and heat shock by preventing the aggregation of stress-denatured proteins and by disaggregating proteins, also in an autonomous, DnaK-independent fashion. Unfolded proteins bind initially to DnaJ; upon interaction with the DnaJ-bound protein, DnaK hydrolyzes its bound ATP, resulting in the formation of a stable complex. GrpE releases ADP from DnaK; ATP binding to DnaK triggers the release of the substrate protein, thus completing the reaction cycle. Several rounds of ATP-dependent interactions between DnaJ, DnaK and GrpE are required for fully efficient folding. Also involved, together with DnaK and GrpE, in the DNA replication of plasmids through activation of initiation proteins. The polypeptide is Chaperone protein DnaJ (Clostridium botulinum (strain Alaska E43 / Type E3)).